A 31-amino-acid chain; its full sequence is Cyclotide hyen-I (31 aa).

A cross-link (cyclopeptide (Gly-Asp)) is located at residues 1 to 31 (GSTPCGESCVWIPCISGIVGCSCSNKVCYMD). Intrachain disulfides connect Cys5–Cys21, Cys9–Cys23, and Cys14–Cys28.

Post-translationally, this is a cyclic peptide. In terms of tissue distribution, detected in seeds (at protein level).

Functionally, probably participates in a plant defense mechanism. This Pigea enneasperma (Spade flower) protein is Cyclotide hyen-I.